Here is a 190-residue protein sequence, read N- to C-terminus: Iron-sulfur assembly protein 1 (190 aa).

Residues 49–71 are disordered; that stretch reads PSLKPSAAGSGSTAPKPVTEREI. Fe cation is bound by residues Cys-116, Cys-180, and Cys-182.

Belongs to the HesB/IscA family.

It is found in the mitochondrion matrix. In terms of biological role, involved in the assembly of mitochondrial and cytoplasmic iron-sulfur proteins. Probably involved in the binding of an intermediate of Fe/S cluster assembly. In Schizosaccharomyces pombe (strain 972 / ATCC 24843) (Fission yeast), this protein is Iron-sulfur assembly protein 1 (isa1).